A 121-amino-acid chain; its full sequence is Urotensin-2 (121 aa).

An N-terminal signal peptide occupies residues Met1 to Ala19. Positions Leu20 to Tyr106 are excised as a propeptide. A disulfide bridge connects residues Cys115 and Cys120.

Belongs to the urotensin-2 family.

It localises to the secreted. Its function is as follows. Highly potent vasoconstrictor. The sequence is that of Urotensin-2 (UTS2) from Sus scrofa (Pig).